The following is a 179-amino-acid chain: Large ribosomal subunit protein uL5 (179 aa).

This sequence belongs to the universal ribosomal protein uL5 family. Part of the 50S ribosomal subunit; part of the 5S rRNA/L5/L18/L25 subcomplex. Contacts the 5S rRNA and the P site tRNA. Forms a bridge to the 30S subunit in the 70S ribosome.

In terms of biological role, this is one of the proteins that bind and probably mediate the attachment of the 5S RNA into the large ribosomal subunit, where it forms part of the central protuberance. In the 70S ribosome it contacts protein S13 of the 30S subunit (bridge B1b), connecting the 2 subunits; this bridge is implicated in subunit movement. Contacts the P site tRNA; the 5S rRNA and some of its associated proteins might help stabilize positioning of ribosome-bound tRNAs. In Nitratidesulfovibrio vulgaris (strain ATCC 29579 / DSM 644 / CCUG 34227 / NCIMB 8303 / VKM B-1760 / Hildenborough) (Desulfovibrio vulgaris), this protein is Large ribosomal subunit protein uL5.